A 195-amino-acid polypeptide reads, in one-letter code: UPF0314 protein RL4541 (195 aa).

The next 4 membrane-spanning stretches (helical) occupy residues 15 to 35 (FWFV…YMMG), 64 to 84 (WYTP…HLIL), 127 to 147 (GDSI…FFFA), and 150 to 170 (APVA…GYII).

Belongs to the UPF0314 family.

The protein localises to the cell membrane. This Rhizobium johnstonii (strain DSM 114642 / LMG 32736 / 3841) (Rhizobium leguminosarum bv. viciae) protein is UPF0314 protein RL4541.